The sequence spans 222 residues: MQLVTAAEMQQIDSYTIETIGMPQNVLIERAAMSVIDVIGAGHFNLDHILVLAGLGNNGADGIAIARLLYTQGFNVSLQFVGNVSRAKASVQQQLQIIENYGLIRAEKSDFNEATLIVDAIFGVGLNNTLPEGLQKMIKAANHIEKTVIAVDIPTGIDATTGEVRGAALKAHTTVTFGYNKVGLTQNVGGYLSGNVIVKDIGLRLPEDFTFTTVTPDNIATT.

The 201-residue stretch at 9–209 folds into the YjeF N-terminal domain; that stretch reads MQQIDSYTIE…DIGLRLPEDF (201 aa). Position 57–61 (57–61) interacts with (6S)-NADPHX; it reads NNGAD. Residues Asn58 and Asp119 each contribute to the K(+) site. Residues 123-129 and Asp152 each bind (6S)-NADPHX; that span reads GVGLNNT. Thr155 provides a ligand contact to K(+).

This sequence belongs to the NnrE/AIBP family. The cofactor is K(+).

It catalyses the reaction (6R)-NADHX = (6S)-NADHX. The catalysed reaction is (6R)-NADPHX = (6S)-NADPHX. Functionally, catalyzes the epimerization of the S- and R-forms of NAD(P)HX, a damaged form of NAD(P)H that is a result of enzymatic or heat-dependent hydration. This is a prerequisite for the S-specific NAD(P)H-hydrate dehydratase to allow the repair of both epimers of NAD(P)HX. The chain is NAD(P)H-hydrate epimerase from Leuconostoc citreum (strain KM20).